The primary structure comprises 273 residues: Bis(5'-nucleosyl)-tetraphosphatase, symmetrical (273 aa).

The protein belongs to the Ap4A hydrolase family.

The enzyme catalyses P(1),P(4)-bis(5'-adenosyl) tetraphosphate + H2O = 2 ADP + 2 H(+). Hydrolyzes diadenosine 5',5'''-P1,P4-tetraphosphate to yield ADP. This Histophilus somni (strain 2336) (Haemophilus somnus) protein is Bis(5'-nucleosyl)-tetraphosphatase, symmetrical.